Consider the following 544-residue polypeptide: MKTKIVATIGPASSSPEIMKQMIDNGLSLVRINSAHADIKDVSKITQMVRSINRDVGIMIDLKGPELRTGEFAGGTLKISSGKDYVMGKDIVLNNMNVLSAVQVGDRILMSDGEVSFEVESTDPFTIRALNDGVLRDRSRVNIPGRFIELGTITDRDRAFIREGIADGVDFFALSFVQKSENVDSLRDFVIDSGGDQYIISKIETKSGLDNIEEIVKSSDGIMVARGDLGVELPLKEVVLAQKHIIKTAHEDGDFTIVATQVLESMVNNSSPTRAEISDITNAIIDNADALMLSEESAIGKYPVQAVRTLKEVSDYVEDKVSFDSSYYFKGNTIAYSVARAAKILSDDIKSDGIVALTHTGSTVRMISSLRPKAMVYAATVSESLARKLNIYFGVLPLHMEGNAEDLSFSEIMEYIVRSGRFADGSKLVMTSGDPYFTFGGTNDVKVAVVGKFIGRGYSFGDSLSGTATYGTKGDILMSEDGRIPGTDFRAFIFTSDIKPSLMSSLKGKTVVTKARLVRQIKEGERIYIDGNTGIILMASPDQK.

Residue Arg-31 coordinates substrate. K(+) is bound by residues Asn-33 and Asp-61. Residue 33 to 36 (NSAH) participates in ATP binding. An ATP-binding site is contributed by Arg-68. Residue Glu-204 participates in Mg(2+) binding. Positions 227, 228, and 260 each coordinate substrate. Asp-228 serves as a coordination point for Mg(2+).

Belongs to the pyruvate kinase family. In terms of assembly, homotetramer. Mg(2+) serves as cofactor. Requires K(+) as cofactor.

The enzyme catalyses pyruvate + ATP = phosphoenolpyruvate + ADP + H(+). The protein operates within carbohydrate degradation; glycolysis; pyruvate from D-glyceraldehyde 3-phosphate: step 5/5. The sequence is that of Pyruvate kinase from Thermoplasma acidophilum (strain ATCC 25905 / DSM 1728 / JCM 9062 / NBRC 15155 / AMRC-C165).